Here is a 321-residue protein sequence, read N- to C-terminus: tRNA uridine(34) hydroxylase (321 aa).

One can recognise a Rhodanese domain in the interval 135 to 233 (DDPDTLVIDT…YLEQVPEEES (99 aa)). The active-site Cysteine persulfide intermediate is C193. The tract at residues 301 to 321 (RQRQMDQLSSASSKKSDDFSL) is disordered.

The protein belongs to the TrhO family.

It carries out the reaction uridine(34) in tRNA + AH2 + O2 = 5-hydroxyuridine(34) in tRNA + A + H2O. In terms of biological role, catalyzes oxygen-dependent 5-hydroxyuridine (ho5U) modification at position 34 in tRNAs. The protein is tRNA uridine(34) hydroxylase of Parasynechococcus marenigrum (strain WH8102).